The chain runs to 209 residues: Protein-L-isoaspartate O-methyltransferase (209 aa).

The active site involves serine 60.

This sequence belongs to the methyltransferase superfamily. L-isoaspartyl/D-aspartyl protein methyltransferase family.

The protein localises to the cytoplasm. The catalysed reaction is [protein]-L-isoaspartate + S-adenosyl-L-methionine = [protein]-L-isoaspartate alpha-methyl ester + S-adenosyl-L-homocysteine. In terms of biological role, catalyzes the methyl esterification of L-isoaspartyl residues in peptides and proteins that result from spontaneous decomposition of normal L-aspartyl and L-asparaginyl residues. It plays a role in the repair and/or degradation of damaged proteins. In Photobacterium profundum (strain SS9), this protein is Protein-L-isoaspartate O-methyltransferase.